A 197-amino-acid polypeptide reads, in one-letter code: Small ribosomal subunit protein uS7 (197 aa).

Belongs to the universal ribosomal protein uS7 family. As to quaternary structure, part of the 30S ribosomal subunit.

In terms of biological role, one of the primary rRNA binding proteins, it binds directly to 16S rRNA where it nucleates assembly of the head domain of the 30S subunit. Is located at the subunit interface close to the decoding center. The sequence is that of Small ribosomal subunit protein uS7 from Methanopyrus kandleri (strain AV19 / DSM 6324 / JCM 9639 / NBRC 100938).